We begin with the raw amino-acid sequence, 394 residues long: NAD(P)H-quinone oxidoreductase subunit H (394 aa).

It belongs to the complex I 49 kDa subunit family. NDH-1 can be composed of about 15 different subunits; different subcomplexes with different compositions have been identified which probably have different functions.

It localises to the cellular thylakoid membrane. It carries out the reaction a plastoquinone + NADH + (n+1) H(+)(in) = a plastoquinol + NAD(+) + n H(+)(out). The catalysed reaction is a plastoquinone + NADPH + (n+1) H(+)(in) = a plastoquinol + NADP(+) + n H(+)(out). Its function is as follows. NDH-1 shuttles electrons from an unknown electron donor, via FMN and iron-sulfur (Fe-S) centers, to quinones in the respiratory and/or the photosynthetic chain. The immediate electron acceptor for the enzyme in this species is believed to be plastoquinone. Couples the redox reaction to proton translocation, and thus conserves the redox energy in a proton gradient. Cyanobacterial NDH-1 also plays a role in inorganic carbon-concentration. This chain is NAD(P)H-quinone oxidoreductase subunit H, found in Thermosynechococcus vestitus (strain NIES-2133 / IAM M-273 / BP-1).